Here is a 433-residue protein sequence, read N- to C-terminus: DNA polymerase processivity factor (433 aa).

A disordered region spans residues 274 to 433 (RGDPFDKNYV…VPNTKKQKCG (160 aa)). Over residues 298 to 307 (SLSSLANAGG) the composition is skewed to low complexity. Composition is skewed to gly residues over residues 325 to 336 (GLGGLGGGGGGG) and 344 to 359 (GGGG…GGGG). Positions 360–376 (GDHDHGLSSKEKYEQHK) are enriched in basic and acidic residues. A compositionally biased stretch (gly residues) spans 385-398 (GGSGGGGGGGGGGL).

Belongs to the herpesviridae polymerase accessory protein family. Forms homodimers. Interacts with host SMARCB1. Interacts with host NCL/nucleolin; this interaction is important for the organization of proteins within viral replication compartments. Interacts with UL112/UL113; this interaction is necessary for efficient viral DNA replication. Interacts with UL84. Interacts with the uracil DNA glycosylase UL114. Interacts with the DNA polymerase catalytic subunit UL54. Interacts with host IRF3. Interacts with host RELA. Phosphorylated by UL97 on serine residues, phosphorylation seems important for UL44 nuclear entry but does not directly affect its role in replication. In terms of processing, sumoylated. Sumoylation on Lys-410 increases viral DNA replication.

The protein resides in the virion. It is found in the host nucleus. In terms of biological role, accessory subunit of the DNA polymerase that plays an essential role in viral DNA replication and acts by increasing the processivity of polymerization. Forms dimers that binds to double-stranded DNA and UL54 specifically to stimulates long chain DNA synthesis efficiently. Plays an important role in maintaining the structure of viral replication compartments by interacting with host nucleolin/NUC. In addition, suppresses innate immune responses through effects on host IRF3 and NF-kappa-B. Mechanistically, interfere with the binding of IRF3 and the p65 NF-kappa-B subunit to the promoters of antiviral genes, thereby inhibiting the expression of these genes. The sequence is that of DNA polymerase processivity factor (UL44) from Human cytomegalovirus (strain Merlin) (HHV-5).